The following is a 445-amino-acid chain: Putative ankyrin repeat protein L797 (445 aa).

4 ANK repeats span residues 73–102 (FMEDCLRQSFYDGQLYIADYLVDKGADIYS), 285–314 (NHEHIANLATQNGHIEILKYLVEEKYELVG), 315–344 (NLYIIMFLACQYGHLEIIKYLVELGVDIRQ), and 346–375 (LDAFIYLLWQGSYFNILKYLLTVDSDIINI).

This is Putative ankyrin repeat protein L797 from Acanthamoeba polyphaga (Amoeba).